We begin with the raw amino-acid sequence, 283 residues long: MIIDKLYENVEKKGCVCVGLDTDISYLPKGFLNKFTNIEDAIFAFNQRIVDSTFDVSACYKVQIAYYEAMGIKGMILYKKTLEYIRKKGGIVIADIKRGDISATAKMYAKAHFEGDFESDFITLNPYMGMDTLEPYKDYFKNKEKGVFLLLRTSNEGSKDIQYLDLKDNKKVYNKVGEKIENIGKEFLGNCGYSSIGAVVGCTAEENNIRKELKHTFFLIPGYGAQGGKAEVAKSYLSEGNGGIVNSSRGILLAYKKYDEEGKNFEECARNEVINMKKTLQII.

The active-site Proton donor is the lysine 97.

It belongs to the OMP decarboxylase family. Type 2 subfamily.

The catalysed reaction is orotidine 5'-phosphate + H(+) = UMP + CO2. It participates in pyrimidine metabolism; UMP biosynthesis via de novo pathway; UMP from orotate: step 2/2. This is Orotidine 5'-phosphate decarboxylase from Clostridium botulinum (strain Okra / Type B1).